A 518-amino-acid polypeptide reads, in one-letter code: 3-phosphoshikimate 1-carboxyvinyltransferase 1, chloroplastic (518 aa).

The N-terminal 74 residues, 1-74, are a transit peptide targeting the chloroplast; it reads MAQISSMGQG…RISASVVTAQ (74 aa). 3-phosphoshikimate is bound by residues Lys-97, Ser-98, and Arg-102. Lys-97 is a phosphoenolpyruvate binding site. Residues Gly-175 and Arg-205 each coordinate phosphoenolpyruvate. 6 residues coordinate 3-phosphoshikimate: Ser-252, Ser-253, Gln-254, Ser-280, Asp-405, and Lys-432. Residue Gln-254 coordinates phosphoenolpyruvate. The active-site Proton acceptor is Asp-405. Phosphoenolpyruvate-binding residues include Arg-436, Arg-478, and Lys-503.

It belongs to the EPSP synthase family.

It is found in the plastid. Its subcellular location is the chloroplast. It carries out the reaction 3-phosphoshikimate + phosphoenolpyruvate = 5-O-(1-carboxyvinyl)-3-phosphoshikimate + phosphate. It participates in metabolic intermediate biosynthesis; chorismate biosynthesis; chorismate from D-erythrose 4-phosphate and phosphoenolpyruvate: step 6/7. Its function is as follows. Catalyzes the transfer of the enolpyruvyl moiety of phosphoenolpyruvate (PEP) to the 5-hydroxyl of shikimate-3-phosphate (S3P) to produce enolpyruvyl shikimate-3-phosphate and inorganic phosphate. This Nicotiana tabacum (Common tobacco) protein is 3-phosphoshikimate 1-carboxyvinyltransferase 1, chloroplastic (EPSPS-1).